The chain runs to 313 residues: tRNA dimethylallyltransferase (313 aa).

9 to 16 (GPTATGKS) contacts ATP. Residue 11 to 16 (TATGKS) participates in substrate binding.

The protein belongs to the IPP transferase family. In terms of assembly, monomer. Mg(2+) serves as cofactor.

It catalyses the reaction adenosine(37) in tRNA + dimethylallyl diphosphate = N(6)-dimethylallyladenosine(37) in tRNA + diphosphate. In terms of biological role, catalyzes the transfer of a dimethylallyl group onto the adenine at position 37 in tRNAs that read codons beginning with uridine, leading to the formation of N6-(dimethylallyl)adenosine (i(6)A). In Nocardia farcinica (strain IFM 10152), this protein is tRNA dimethylallyltransferase.